We begin with the raw amino-acid sequence, 288 residues long: 2-dehydro-3-deoxyphosphooctonate aldolase (288 aa).

Belongs to the KdsA family.

The protein localises to the cytoplasm. It carries out the reaction D-arabinose 5-phosphate + phosphoenolpyruvate + H2O = 3-deoxy-alpha-D-manno-2-octulosonate-8-phosphate + phosphate. The protein operates within carbohydrate biosynthesis; 3-deoxy-D-manno-octulosonate biosynthesis; 3-deoxy-D-manno-octulosonate from D-ribulose 5-phosphate: step 2/3. It functions in the pathway bacterial outer membrane biogenesis; lipopolysaccharide biosynthesis. The polypeptide is 2-dehydro-3-deoxyphosphooctonate aldolase (Syntrophobacter fumaroxidans (strain DSM 10017 / MPOB)).